Reading from the N-terminus, the 528-residue chain is DnaJ homolog 1, mitochondrial (528 aa).

A mitochondrion-targeting transit peptide spans 1–66 (MFSKYLQSRV…REFSRCAALK (66 aa)). The J domain maps to 86-150 (DPYKTLGVSK…KKKKAFDTYG (65 aa)). A CR-type zinc finger spans residues 227 to 308 (GAKKDLSYSV…CMGSGTVRER (82 aa)). CXXCXGXG motif repeat units follow at residues 240–247 (CSSCHGSG), 257–264 (CFACKGTG), 280–287 (CDSCGGTG), and 296–303 (CRSCMGSG). The disordered stretch occupies residues 455 to 528 (NDSTARRTQS…QNPKKDESSS (74 aa)). Residues 462–488 (TQSSPSGTNSSTSTSSTSSKHSTGIST) are compositionally biased toward low complexity. Residues 513–528 (LHPDEDQNPKKDESSS) are compositionally biased toward basic and acidic residues.

The protein localises to the mitochondrion. The chain is DnaJ homolog 1, mitochondrial (mdj1) from Schizosaccharomyces pombe (strain 972 / ATCC 24843) (Fission yeast).